The chain runs to 867 residues: Bifunctional diterpene synthase, chloroplastic (867 aa).

The N-terminal 55 residues, 1 to 55, are a transit peptide targeting the chloroplast; it reads MAKVLFSSFQQTGISGSLKSGQLSGVFINGTNLKSNAHAKRFRKNSTSSITIRCC. K255 contributes to the substrate binding site. Mg(2+) is bound by residues D389 and D391. Residues 389–392 carry the DXDD motif motif; it reads DIDD. K474 serves as a coordination point for substrate. Mg(2+) contacts are provided by D611, D615, N758, T762, and E766. Residues 611–615 carry the DDXXD motif motif; the sequence is DDLMD.

Belongs to the terpene synthase family. The cofactor is Mg(2+).

The protein resides in the plastid. It localises to the chloroplast. It catalyses the reaction (+)-copalyl diphosphate = miltiradiene + diphosphate. The catalysed reaction is (2E,6E,10E)-geranylgeranyl diphosphate = (+)-copalyl diphosphate. The protein operates within secondary metabolite biosynthesis; terpenoid biosynthesis. Bifunctional diterpene cyclase that catalyzes the successive two-step type-B (protonation-initiated cyclization) and type-A (ionization-initiated cyclization) reactions of geranylgeranyl diphosphate (GGDP) producing successively (+)-copalyl diphosphate and miltiradiene. This Selaginella moellendorffii (Spikemoss) protein is Bifunctional diterpene synthase, chloroplastic (MDS).